We begin with the raw amino-acid sequence, 888 residues long: Patched domain-containing protein 1 (888 aa).

The helical transmembrane segment at 20–40 threads the bilayer; sequence FIASHPVFFASAPVLISILLG. N-linked (GlcNAc...) asparagine glycosylation is found at N77, N133, and N167. An SSD domain is found at 268 to 427; sequence SERYLVTSLI…LSFYGSSLVF (160 aa). Transmembrane regions (helical) follow at residues 273–293 and 298–318; these read VTSL…QDCV and WLGL…AGII. 2 N-linked (GlcNAc...) asparagine glycosylation sites follow: N319 and N326. 4 helical membrane-spanning segments follow: residues 328–348, 373–393, 407–427, and 502–522; these read TFLG…FEML, LSFS…ASPF, CIAI…SLVF, and PFVV…YLQV. N568, N599, and N608 each carry an N-linked (GlcNAc...) asparagine glycan. 2 consecutive transmembrane segments (helical) span residues 707–727 and 738–758; these read ALFL…NVWI and VIGF…LCLI. N-linked (GlcNAc...) asparagine glycosylation occurs at N762. A helical membrane pass occupies residues 795–815; sequence GVAILQSYLCYIVGLIPLAAV. N-linked (GlcNAc...) asparagine glycosylation occurs at N818. Residues 826–846 traverse the membrane as a helical segment; that stretch reads CLFLIAFVTFFHCFAILPVIL.

This sequence belongs to the patched family. Widely expressed, including in various regions of the brain with highest expression in the gray and white cerebellum, followed by the cerebellar vermis and the pituitary gland.

The protein resides in the cell membrane. The protein localises to the cell projection. Its subcellular location is the dendritic spine. Functionally, required for the development and function of the thalamic reticular nucleus (TRN), a part of the thalamus that is critical for thalamocortical transmission, generation of sleep rhythms, sensorimotor processing and attention. Can bind cholesterol in vitro. The chain is Patched domain-containing protein 1 from Homo sapiens (Human).